Consider the following 430-residue polypeptide: Tyrosine--tRNA ligase (430 aa).

Y32 is an L-tyrosine binding site. Residues 37 to 46 (PTADSLHIGH) carry the 'HIGH' region motif. 2 residues coordinate L-tyrosine: Y172 and Q176. Positions 232-236 (KFGKT) match the 'KMSKS' region motif. K235 contributes to the ATP binding site. Residues 362–430 (ISLVDLLADA…KKSYYLIIVE (69 aa)) enclose the S4 RNA-binding domain.

The protein belongs to the class-I aminoacyl-tRNA synthetase family. TyrS type 1 subfamily. Homodimer.

It localises to the cytoplasm. It catalyses the reaction tRNA(Tyr) + L-tyrosine + ATP = L-tyrosyl-tRNA(Tyr) + AMP + diphosphate + H(+). Catalyzes the attachment of tyrosine to tRNA(Tyr) in a two-step reaction: tyrosine is first activated by ATP to form Tyr-AMP and then transferred to the acceptor end of tRNA(Tyr). This is Tyrosine--tRNA ligase from Porphyromonas gingivalis (strain ATCC BAA-308 / W83).